A 363-amino-acid chain; its full sequence is Neutral protease 2 homolog MEP7 (363 aa).

Positions 1 to 19 (MLLCSMVAALAALATPAFS) are cleaved as a signal peptide. Residues 20–181 (CALPHLDLPE…ARAIQPLDRR (162 aa)) constitute a propeptide that is removed on maturation. Intrachain disulfides connect Cys187/Cys259 and Cys266/Cys284. Residue His308 coordinates Zn(2+). Residue Glu309 is part of the active site. Residues His312 and Asp323 each coordinate Zn(2+).

Belongs to the peptidase M35 family. Requires Zn(2+) as cofactor.

It localises to the secreted. It catalyses the reaction Preferential cleavage of bonds with hydrophobic residues in P1'. Also 3-Asn-|-Gln-4 and 8-Gly-|-Ser-9 bonds in insulin B chain.. Its function is as follows. Secreted metalloproteinase that allows assimilation of proteinaceous substrates. Shows high activities on basic nuclear substrates such as histone and protamine. May be involved in virulence. The polypeptide is Neutral protease 2 homolog MEP7 (MEP7) (Coccidioides posadasii (strain C735) (Valley fever fungus)).